We begin with the raw amino-acid sequence, 213 residues long: Orotate phosphoribosyltransferase (213 aa).

Lysine 26 is a 5-phospho-alpha-D-ribose 1-diphosphate binding site. Residue 34 to 35 coordinates orotate; sequence FF. 5-phospho-alpha-D-ribose 1-diphosphate contacts are provided by residues 72–73, arginine 99, lysine 100, lysine 103, histidine 105, and 124–132; these read YK and DDVITAGTA. Residues threonine 128 and arginine 156 each contribute to the orotate site.

The protein belongs to the purine/pyrimidine phosphoribosyltransferase family. PyrE subfamily. As to quaternary structure, homodimer. It depends on Mg(2+) as a cofactor.

The catalysed reaction is orotidine 5'-phosphate + diphosphate = orotate + 5-phospho-alpha-D-ribose 1-diphosphate. The protein operates within pyrimidine metabolism; UMP biosynthesis via de novo pathway; UMP from orotate: step 1/2. Its function is as follows. Catalyzes the transfer of a ribosyl phosphate group from 5-phosphoribose 1-diphosphate to orotate, leading to the formation of orotidine monophosphate (OMP). The protein is Orotate phosphoribosyltransferase of Thioalkalivibrio sulfidiphilus (strain HL-EbGR7).